We begin with the raw amino-acid sequence, 450 residues long: 23S rRNA (uracil(1939)-C(5))-methyltransferase RlmD (450 aa).

Residues S12–K70 form the TRAM domain. C83, C89, C92, and C171 together coordinate [4Fe-4S] cluster. Q283, F312, N317, E333, D360, and D380 together coordinate S-adenosyl-L-methionine. C406 functions as the Nucleophile in the catalytic mechanism.

This sequence belongs to the class I-like SAM-binding methyltransferase superfamily. RNA M5U methyltransferase family. RlmD subfamily.

It catalyses the reaction uridine(1939) in 23S rRNA + S-adenosyl-L-methionine = 5-methyluridine(1939) in 23S rRNA + S-adenosyl-L-homocysteine + H(+). Catalyzes the formation of 5-methyl-uridine at position 1939 (m5U1939) in 23S rRNA. In Shewanella baltica (strain OS195), this protein is 23S rRNA (uracil(1939)-C(5))-methyltransferase RlmD.